Consider the following 173-residue polypeptide: Crossover junction endodeoxyribonuclease RuvC (173 aa).

Catalysis depends on residues aspartate 8, glutamate 67, and aspartate 139. Positions 8, 67, and 139 each coordinate Mg(2+).

Belongs to the RuvC family. In terms of assembly, homodimer which binds Holliday junction (HJ) DNA. The HJ becomes 2-fold symmetrical on binding to RuvC with unstacked arms; it has a different conformation from HJ DNA in complex with RuvA. In the full resolvosome a probable DNA-RuvA(4)-RuvB(12)-RuvC(2) complex forms which resolves the HJ. Requires Mg(2+) as cofactor.

The protein localises to the cytoplasm. The catalysed reaction is Endonucleolytic cleavage at a junction such as a reciprocal single-stranded crossover between two homologous DNA duplexes (Holliday junction).. The RuvA-RuvB-RuvC complex processes Holliday junction (HJ) DNA during genetic recombination and DNA repair. Endonuclease that resolves HJ intermediates. Cleaves cruciform DNA by making single-stranded nicks across the HJ at symmetrical positions within the homologous arms, yielding a 5'-phosphate and a 3'-hydroxyl group; requires a central core of homology in the junction. The consensus cleavage sequence is 5'-(A/T)TT(C/G)-3'. Cleavage occurs on the 3'-side of the TT dinucleotide at the point of strand exchange. HJ branch migration catalyzed by RuvA-RuvB allows RuvC to scan DNA until it finds its consensus sequence, where it cleaves and resolves the cruciform DNA. This chain is Crossover junction endodeoxyribonuclease RuvC, found in Klebsiella pneumoniae subsp. pneumoniae (strain ATCC 700721 / MGH 78578).